The chain runs to 295 residues: Acetylglutamate kinase (295 aa).

Substrate is bound by residues 64 to 65, Arg-86, and Asn-190; that span reads GG.

Belongs to the acetylglutamate kinase family. ArgB subfamily.

It localises to the cytoplasm. The catalysed reaction is N-acetyl-L-glutamate + ATP = N-acetyl-L-glutamyl 5-phosphate + ADP. Its pathway is amino-acid biosynthesis; L-arginine biosynthesis; N(2)-acetyl-L-ornithine from L-glutamate: step 2/4. Catalyzes the ATP-dependent phosphorylation of N-acetyl-L-glutamate. The chain is Acetylglutamate kinase from Pelotomaculum thermopropionicum (strain DSM 13744 / JCM 10971 / SI).